The following is an 86-amino-acid chain: Neurotoxin 8-related gene product 1/2/3 (86 aa).

The signal sequence occupies residues 1–19; that stretch reads MNYLTMISLALLVMTGVES. Residues 22-84 form the LCN-type CS-alpha/beta domain; it reads RDAYIADNKN…VPIKVPGKCN (63 aa). Cystine bridges form between Cys-32-Cys-83, Cys-36-Cys-56, Cys-42-Cys-66, and Cys-46-Cys-68. Asn-84 is modified (asparagine amide).

This sequence belongs to the long (4 C-C) scorpion toxin superfamily. Sodium channel inhibitor family. Alpha subfamily. Expressed by the venom gland.

It is found in the secreted. In terms of biological role, binds voltage-dependently at site-3 of sodium channels (Nav) and inhibits the inactivation of the activated channels, thereby blocking neuronal transmission. This chain is Neurotoxin 8-related gene product 1/2/3 (NTVIIIrgp1), found in Androctonus mauritanicus mauritanicus (Scorpion).